A 140-amino-acid polypeptide reads, in one-letter code: Protein BIC1 (140 aa).

Residues 1 to 10 (MMNIDDTTSP) are compositionally biased toward polar residues. A disordered region spans residues 1-71 (MMNIDDTTSP…RVDTGRERLK (71 aa)). The segment covering 42 to 68 (ADKKDLALLEEKPKQSQEEDRVDTGRE) has biased composition (basic and acidic residues).

Interacts with CRY2 in both darkness and light.

It is found in the nucleus. In terms of biological role, regulates the blue-light dependent dimerization of CRY2 and formation of photobodies. Interacts with photoexited CRY2 to inhibit its activity. Inhibits CRY phosphorylation. This is Protein BIC1 from Arabidopsis thaliana (Mouse-ear cress).